The following is a 311-amino-acid chain: Nudix hydrolase 9 (311 aa).

A Nudix hydrolase domain is found at 131–298 (SSPLGNGAVI…GFALYELMLQ (168 aa)). The Nudix box motif lies at 192-213 (LNKKVTQEMFDSIICEVVEETG). Residues Glu-207 and Glu-211 each coordinate Mg(2+).

It belongs to the Nudix hydrolase family. The cofactor is Mg(2+). Requires Mn(2+) as cofactor. Expressed in roots, stems and leaves.

In terms of biological role, probably mediates the hydrolysis of some nucleoside diphosphate derivatives. The chain is Nudix hydrolase 9 (NUDT9) from Arabidopsis thaliana (Mouse-ear cress).